The chain runs to 1654 residues: Cortactin-binding protein 2 (1654 aa).

A disordered region spans residues 1-31 (MATDGASCEPDFSRSPEDAAGATAEPAKKEF). Residues 119–276 (RKMQERMSTQ…EQLKRGSDSK (158 aa)) adopt a coiled-coil conformation. Disordered regions lie at residues 361 to 432 (SHGD…LHSP), 455 to 480 (GNANDPDQNGNTSQSPPSRDVSPTSR), and 495 to 596 (QALS…PQGN). Residues 368-379 (SSVPAAPTPSAS) are compositionally biased toward low complexity. 2 stretches are compositionally biased toward polar residues: residues 384 to 395 (NGPSTGSAPDPT) and 411 to 422 (QTPGTAAQSYSQ). Arg-499 is modified (asymmetric dimethylarginine). Polar residues predominate over residues 518-531 (DVSSHTPVSRTSLK). ANK repeat units follow at residues 710–740 (GRPTLLQQAAAQGNVTLLSMLLNEEGLDINY), 744–773 (DGHSALYSAAKNGHTDCVRLLLNAQAQVNA), 777–806 (NGFTPLCAAAAQGHFKCIELLIANDANINH), 810–839 (GGQTPLYLACKNGNNECIKLLLGAGSDRSV), 843–872 (DGWTPVHAAVDTGNVDNLKLLMYYEAPIPG), and 913–943 (EGWTAAHIAASKGFKNCLEILCRHRGLEPER). The segment at 1454 to 1478 (GAWRKVSTSPRKKSGHFSSPVWNKP) is disordered. The residue at position 1523 (Ser-1523) is a Phosphoserine. The interval 1556-1654 (RRLHSSGNNP…KEEIWNLRKK (99 aa)) is disordered. Polar residues predominate over residues 1581 to 1598 (KEVSPLSSHQTTECSNNK). A compositionally biased stretch (low complexity) spans 1623–1637 (SQNTKRSSSSSNTRQ). Basic and acidic residues predominate over residues 1644 to 1654 (SKEEIWNLRKK).

As to quaternary structure, interacts with CTTN/cortactin SH3 domain. Interacts with STRN, STRN4/zinedin and MOB4/phocein; this interactions mediate the association with the STRIPAK core complex and may regulate dendritic spine distribution of the STRIPAK complex in hippocampal neurons. Activation of glutamate receptors weakens the interaction with STRN and STRN4.

The protein resides in the cytoplasm. It localises to the cell cortex. The protein localises to the cell projection. Its subcellular location is the dendritic spine. Regulates the dendritic spine distribution of CTTN/cortactin in hippocampal neurons, and thus controls dendritic spinogenesis and dendritic spine maintenance. Associates with the striatin-interacting phosphatase and kinase (STRIPAK) core complex to regulate dendritic spine distribution of the STRIPAK complex in hippocampal neurons. In Atelerix albiventris (Middle-African hedgehog), this protein is Cortactin-binding protein 2 (CTTNBP2).